The primary structure comprises 234 residues: Sugar fermentation stimulation protein homolog (234 aa).

It belongs to the SfsA family.

This chain is Sugar fermentation stimulation protein homolog, found in Shewanella baltica (strain OS223).